We begin with the raw amino-acid sequence, 322 residues long: SUMO-activating enzyme subunit 1A (322 aa).

An N-acetylmethionine modification is found at M1.

This sequence belongs to the ubiquitin-activating E1 family. As to quaternary structure, heterodimer of SAE1A or SAE1B and SAE2. The complex binds SUMO proteins via SAE2.

The protein localises to the nucleus. It participates in protein modification; protein sumoylation. The dimeric enzyme acts as an E1 ligase for SUMO1 and SUMO2. It mediates ATP-dependent activation of SUMO proteins and formation of a thioester with a conserved cysteine residue on SAE2. Functionally redundant with its paralog SAE1B. This is SUMO-activating enzyme subunit 1A (SAE1A) from Arabidopsis thaliana (Mouse-ear cress).